Reading from the N-terminus, the 178-residue chain is Interleukin-10 (178 aa).

Positions 1-18 (MPGSALLCCLALLAGVKA) are cleaved as a signal peptide. Cystine bridges form between Cys30/Cys126 and Cys80/Cys132. Asn67 carries an N-linked (GlcNAc...) asparagine glycan. Residue Asn134 is glycosylated (N-linked (GlcNAc...) asparagine).

This sequence belongs to the IL-10 family. Homodimer. Interacts with IL10RA and IL10RB.

The protein localises to the secreted. Major immune regulatory cytokine that acts on many cells of the immune system where it has profound anti-inflammatory functions, limiting excessive tissue disruption caused by inflammation. Mechanistically, IL10 binds to its heterotetrameric receptor comprising IL10RA and IL10RB leading to JAK1 and STAT2-mediated phosphorylation of STAT3. In turn, STAT3 translocates to the nucleus where it drives expression of anti-inflammatory mediators. Targets antigen-presenting cells (APCs) such as macrophages and monocytes and inhibits their release of pro-inflammatory cytokines including granulocyte-macrophage colony-stimulating factor /GM-CSF, granulocyte colony-stimulating factor/G-CSF, IL-1 alpha, IL-1 beta, IL-6, IL-8 and TNF-alpha. Also interferes with antigen presentation by reducing the expression of MHC-class II and co-stimulatory molecules, thereby inhibiting their ability to induce T cell activation. In addition, controls the inflammatory response of macrophages by reprogramming essential metabolic pathways including mTOR signaling. This is Interleukin-10 (IL10) from Cavia porcellus (Guinea pig).